The following is a 180-amino-acid chain: Negative modulator of initiation of replication (180 aa).

3 interaction with DNA regions span residues 86–87, 115–119, and 149–155; these read AV, RTRVY, and NTNTGRK.

Belongs to the SeqA family. Homodimer. Polymerizes to form helical filaments.

It localises to the cytoplasm. Its function is as follows. Negative regulator of replication initiation, which contributes to regulation of DNA replication and ensures that replication initiation occurs exactly once per chromosome per cell cycle. Binds to pairs of hemimethylated GATC sequences in the oriC region, thus preventing assembly of replication proteins and re-initiation at newly replicated origins. Repression is relieved when the region becomes fully methylated. This Enterobacter sp. (strain 638) protein is Negative modulator of initiation of replication.